Consider the following 235-residue polypeptide: Putative HAD-hydrolase YfnB (235 aa).

Aspartate 10 serves as the catalytic Nucleophile.

This sequence belongs to the HAD-like hydrolase superfamily. YjjG family.

This Bacillus subtilis (strain 168) protein is Putative HAD-hydrolase YfnB (yfnB).